A 450-amino-acid polypeptide reads, in one-letter code: tRNA-2-methylthio-N(6)-dimethylallyladenosine synthase (450 aa).

The 121-residue stretch at 7–127 (KKVFIKTYGC…LPDVLARVRG (121 aa)) folds into the MTTase N-terminal domain. [4Fe-4S] cluster contacts are provided by C16, C52, C90, C168, C172, and C175. Positions 154–388 (IKRGVTAFLT…LLLKQQQGFG (235 aa)) constitute a Radical SAM core domain. One can recognise a TRAM domain in the interval 389–450 (SSLVGSTIDT…GYNSLFAELA (62 aa)).

The protein belongs to the methylthiotransferase family. MiaB subfamily. Monomer. Requires [4Fe-4S] cluster as cofactor.

The protein resides in the cytoplasm. It carries out the reaction N(6)-dimethylallyladenosine(37) in tRNA + (sulfur carrier)-SH + AH2 + 2 S-adenosyl-L-methionine = 2-methylsulfanyl-N(6)-dimethylallyladenosine(37) in tRNA + (sulfur carrier)-H + 5'-deoxyadenosine + L-methionine + A + S-adenosyl-L-homocysteine + 2 H(+). Its function is as follows. Catalyzes the methylthiolation of N6-(dimethylallyl)adenosine (i(6)A), leading to the formation of 2-methylthio-N6-(dimethylallyl)adenosine (ms(2)i(6)A) at position 37 in tRNAs that read codons beginning with uridine. This Mesorhizobium japonicum (strain LMG 29417 / CECT 9101 / MAFF 303099) (Mesorhizobium loti (strain MAFF 303099)) protein is tRNA-2-methylthio-N(6)-dimethylallyladenosine synthase.